The following is a 1108-amino-acid chain: Alpha-mannosidase 2 (1108 aa).

The Cytoplasmic segment spans residues 1–9 (MLRIRRRFA). The helical; Signal-anchor for type II membrane protein transmembrane segment at 10-30 (LVICSGCLLVFLSLYIILNFA) threads the bilayer. Topologically, residues 31 to 1108 (APAATQIKPN…TAAYVSSHSS (1078 aa)) are lumenal. The tract at residues 70–92 (AETSNRDDPIRPPLKVARSPRPG) is disordered. His-153, Asp-155, Asp-267, and His-534 together coordinate Zn(2+). Asp-267 functions as the Nucleophile in the catalytic mechanism.

This sequence belongs to the glycosyl hydrolase 38 family. As to quaternary structure, homodimer; disulfide-linked. It depends on Zn(2+) as a cofactor.

Its subcellular location is the golgi apparatus membrane. It catalyses the reaction N(4)-{beta-D-GlcNAc-(1-&gt;2)-alpha-D-Man-(1-&gt;3)-[alpha-D-Man-(1-&gt;3)-[alpha-D-Man-(1-&gt;6)]-alpha-D-Man-(1-&gt;6)]-beta-D-Man-(1-&gt;4)-beta-D-GlcNAc-(1-&gt;4)-beta-D-GlcNAc}-L-asparaginyl-[protein] + 2 H2O = 2 alpha-D-mannopyranose + an N(4)-{beta-D-GlcNAc-(1-&gt;2)-alpha-D-Man-(1-&gt;3)-[alpha-D-Man-(1-&gt;6)]-beta-D-Man-(1-&gt;4)-beta-D-GlcNAc-(1-&gt;4)-beta-D-GlcNAc}-L-asparaginyl-[protein]. It functions in the pathway protein modification; protein glycosylation. Its function is as follows. Catalyzes the first committed step in the biosynthesis of complex N-glycans. It controls conversion of high mannose to complex N-glycans; the final hydrolytic step in the N-glycan maturation pathway. This is Alpha-mannosidase 2 from Drosophila melanogaster (Fruit fly).